Reading from the N-terminus, the 215-residue chain is MSNNSRHYSAIDEAILQGQAMLETLFGKPVAQRENPAKGLSQPALTSAEKKQSIGFMRVNHSGEVCAQALYHGQMATAKNPAVRALFTTAAKEETDHLAWCQERLEELGGHTSYLNAFWYTNSFLIGLLAGLSGDPLSLGFVEETEKQVEIHLADHLRKIPSSDLKSRKIVEYMQQDEIQHGLNARSSGAKELPYLVKKLMAFHAKVMTTLAYWI.

Residues glutamate 64, glutamate 94, histidine 97, glutamate 146, glutamate 178, and histidine 181 each coordinate Fe cation.

Belongs to the COQ7 family. The cofactor is Fe cation.

It is found in the cell membrane. The catalysed reaction is a 5-methoxy-2-methyl-3-(all-trans-polyprenyl)benzene-1,4-diol + AH2 + O2 = a 3-demethylubiquinol + A + H2O. Its pathway is cofactor biosynthesis; ubiquinone biosynthesis. Its function is as follows. Catalyzes the hydroxylation of 2-nonaprenyl-3-methyl-6-methoxy-1,4-benzoquinol during ubiquinone biosynthesis. This is 3-demethoxyubiquinol 3-hydroxylase from Coxiella burnetii (strain Dugway 5J108-111).